The following is a 313-amino-acid chain: CRISPR-associated endonuclease Cas1 1 (313 aa).

3 residues coordinate Mn(2+): Glu144, His211, and Asp224. Residues 288 to 313 are disordered; it reads PPLDAPEAVDPVIPPEEPSGDDGHRG.

The protein belongs to the CRISPR-associated endonuclease Cas1 family. Homodimer, forms a heterotetramer with a Cas2 homodimer. Mg(2+) serves as cofactor. Requires Mn(2+) as cofactor.

Functionally, CRISPR (clustered regularly interspaced short palindromic repeat), is an adaptive immune system that provides protection against mobile genetic elements (viruses, transposable elements and conjugative plasmids). CRISPR clusters contain spacers, sequences complementary to antecedent mobile elements, and target invading nucleic acids. CRISPR clusters are transcribed and processed into CRISPR RNA (crRNA). Acts as a dsDNA endonuclease. Involved in the integration of spacer DNA into the CRISPR cassette. The protein is CRISPR-associated endonuclease Cas1 1 of Rhodospirillum rubrum (strain ATCC 11170 / ATH 1.1.1 / DSM 467 / LMG 4362 / NCIMB 8255 / S1).